Consider the following 534-residue polypeptide: uncharacterized protein (534 aa).

A run of 5 helical transmembrane segments spans residues I4–F22, G24–I46, A56–A75, A82–G104, and P134–V156. The disordered stretch occupies residues G167–A187. A compositionally biased stretch (polar residues) spans T172–A187. RCK C-terminal domains are found at residues G180–E264 and L265–H349. 6 helical membrane-spanning segments follow: residues L359–Q378, F382–H401, I408–A430, M445–F467, W479–A501, and Y511–I533.

This sequence belongs to the AAE transporter (TC 2.A.81) family.

It localises to the cell membrane. This is an uncharacterized protein from Rhodopirellula baltica (strain DSM 10527 / NCIMB 13988 / SH1).